A 190-amino-acid polypeptide reads, in one-letter code: Large ribosomal subunit protein uL6 (190 aa).

This sequence belongs to the universal ribosomal protein uL6 family.

In Drosophila melanogaster (Fruit fly), this protein is Large ribosomal subunit protein uL6 (RpL9).